Consider the following 175-residue polypeptide: Inorganic pyrophosphatase 1 (175 aa).

3 residues coordinate substrate: K30, R44, and Y56. Positions 66, 71, and 103 each coordinate Mg(2+). A substrate-binding site is contributed by Y142.

The protein belongs to the PPase family. Homohexamer. Mg(2+) serves as cofactor.

The protein resides in the cytoplasm. It carries out the reaction diphosphate + H2O = 2 phosphate + H(+). Its function is as follows. Catalyzes the hydrolysis of inorganic pyrophosphate (PPi) forming two phosphate ions. The sequence is that of Inorganic pyrophosphatase 1 from Pseudomonas syringae pv. tomato (strain ATCC BAA-871 / DC3000).